Consider the following 217-residue polypeptide: Probable transaldolase (217 aa).

The Schiff-base intermediate with substrate role is filled by lysine 83.

This sequence belongs to the transaldolase family. Type 3B subfamily.

It is found in the cytoplasm. It carries out the reaction D-sedoheptulose 7-phosphate + D-glyceraldehyde 3-phosphate = D-erythrose 4-phosphate + beta-D-fructose 6-phosphate. Its pathway is carbohydrate degradation; pentose phosphate pathway; D-glyceraldehyde 3-phosphate and beta-D-fructose 6-phosphate from D-ribose 5-phosphate and D-xylulose 5-phosphate (non-oxidative stage): step 2/3. In terms of biological role, transaldolase is important for the balance of metabolites in the pentose-phosphate pathway. This Bartonella tribocorum (strain CIP 105476 / IBS 506) protein is Probable transaldolase.